A 90-amino-acid chain; its full sequence is Probable Fe(2+)-trafficking protein (90 aa).

Belongs to the Fe(2+)-trafficking protein family.

Functionally, could be a mediator in iron transactions between iron acquisition and iron-requiring processes, such as synthesis and/or repair of Fe-S clusters in biosynthetic enzymes. The sequence is that of Probable Fe(2+)-trafficking protein from Nitrosospira multiformis (strain ATCC 25196 / NCIMB 11849 / C 71).